The chain runs to 483 residues: Aspartyl/glutamyl-tRNA(Asn/Gln) amidotransferase subunit B (483 aa).

Belongs to the GatB/GatE family. GatB subfamily. In terms of assembly, heterotrimer of A, B and C subunits.

It catalyses the reaction L-glutamyl-tRNA(Gln) + L-glutamine + ATP + H2O = L-glutaminyl-tRNA(Gln) + L-glutamate + ADP + phosphate + H(+). It carries out the reaction L-aspartyl-tRNA(Asn) + L-glutamine + ATP + H2O = L-asparaginyl-tRNA(Asn) + L-glutamate + ADP + phosphate + 2 H(+). Allows the formation of correctly charged Asn-tRNA(Asn) or Gln-tRNA(Gln) through the transamidation of misacylated Asp-tRNA(Asn) or Glu-tRNA(Gln) in organisms which lack either or both of asparaginyl-tRNA or glutaminyl-tRNA synthetases. The reaction takes place in the presence of glutamine and ATP through an activated phospho-Asp-tRNA(Asn) or phospho-Glu-tRNA(Gln). The chain is Aspartyl/glutamyl-tRNA(Asn/Gln) amidotransferase subunit B from Roseiflexus castenholzii (strain DSM 13941 / HLO8).